The following is a 130-amino-acid chain: Small ribosomal subunit protein uS9 (130 aa).

The segment at 109–130 (RAKERKKYGLYGARRSPQFTKR) is disordered.

Belongs to the universal ribosomal protein uS9 family.

The protein is Small ribosomal subunit protein uS9 of Malacoplasma penetrans (strain HF-2) (Mycoplasma penetrans).